Consider the following 407-residue polypeptide: uncharacterized protein (407 aa).

A Glycyl lysine isopeptide (Lys-Gly) (interchain with G-Cter in ubiquitin) cross-link involves residue Lys-22.

The protein belongs to the SVF1 family.

The protein localises to the cytoplasm. This is an uncharacterized protein from Saccharomyces cerevisiae (strain ATCC 204508 / S288c) (Baker's yeast).